The sequence spans 78 residues: Sec-independent protein translocase protein TatA (78 aa).

Residues Ser4 to Arg21 form a helical membrane-spanning segment. The disordered stretch occupies residues Thr49–Val78. The segment covering Thr57–Val78 has biased composition (polar residues).

The protein belongs to the TatA/E family. As to quaternary structure, the Tat system comprises two distinct complexes: a TatABC complex, containing multiple copies of TatA, TatB and TatC subunits, and a separate TatA complex, containing only TatA subunits. Substrates initially bind to the TatABC complex, which probably triggers association of the separate TatA complex to form the active translocon.

The protein resides in the cell inner membrane. Its function is as follows. Part of the twin-arginine translocation (Tat) system that transports large folded proteins containing a characteristic twin-arginine motif in their signal peptide across membranes. TatA could form the protein-conducting channel of the Tat system. The protein is Sec-independent protein translocase protein TatA of Afipia carboxidovorans (strain ATCC 49405 / DSM 1227 / KCTC 32145 / OM5) (Oligotropha carboxidovorans).